We begin with the raw amino-acid sequence, 307 residues long: 4-hydroxythreonine-4-phosphate dehydrogenase (307 aa).

His-126 and Thr-127 together coordinate substrate. 3 residues coordinate a divalent metal cation: His-156, His-195, and His-251. Substrate is bound by residues Lys-259, Asn-268, and Arg-277.

This sequence belongs to the PdxA family. In terms of assembly, homodimer. The cofactor is Zn(2+). Mg(2+) serves as cofactor. It depends on Co(2+) as a cofactor.

The protein resides in the cytoplasm. It carries out the reaction 4-(phosphooxy)-L-threonine + NAD(+) = 3-amino-2-oxopropyl phosphate + CO2 + NADH. It functions in the pathway cofactor biosynthesis; pyridoxine 5'-phosphate biosynthesis; pyridoxine 5'-phosphate from D-erythrose 4-phosphate: step 4/5. Functionally, catalyzes the NAD(P)-dependent oxidation of 4-(phosphooxy)-L-threonine (HTP) into 2-amino-3-oxo-4-(phosphooxy)butyric acid which spontaneously decarboxylates to form 3-amino-2-oxopropyl phosphate (AHAP). The polypeptide is 4-hydroxythreonine-4-phosphate dehydrogenase (Helicobacter pylori (strain J99 / ATCC 700824) (Campylobacter pylori J99)).